The following is a 98-amino-acid chain: NADH-ubiquinone oxidoreductase chain 4L (98 aa).

A run of 3 helical transmembrane segments spans residues 1-21 (MSMV…GLLM), 29-49 (SLLC…VTIL), and 61-81 (IILL…LVMV).

This sequence belongs to the complex I subunit 4L family. Core subunit of respiratory chain NADH dehydrogenase (Complex I) which is composed of 45 different subunits.

The protein resides in the mitochondrion inner membrane. It catalyses the reaction a ubiquinone + NADH + 5 H(+)(in) = a ubiquinol + NAD(+) + 4 H(+)(out). Its function is as follows. Core subunit of the mitochondrial membrane respiratory chain NADH dehydrogenase (Complex I) which catalyzes electron transfer from NADH through the respiratory chain, using ubiquinone as an electron acceptor. Part of the enzyme membrane arm which is embedded in the lipid bilayer and involved in proton translocation. This is NADH-ubiquinone oxidoreductase chain 4L (MT-ND4L) from Pusa hispida (Ringed seal).